Here is a 380-residue protein sequence, read N- to C-terminus: Actinidain (380 aa).

The N-terminal stretch at 1–24 (MGLPKSFVSMSLLFFSTLLILSLA) is a signal peptide. Residues 25–126 (FNAKNLTQRT…NRYEPRVGQV (102 aa)) constitute a propeptide, activation peptide. N-linked (GlcNAc...) asparagine glycosylation is found at asparagine 29, asparagine 81, and asparagine 111. Disulfide bonds link cysteine 148-cysteine 191, cysteine 182-cysteine 224, and cysteine 282-cysteine 332. Cysteine 151 is a catalytic residue. Residues histidine 288 and asparagine 308 contribute to the active site.

Belongs to the peptidase C1 family. In terms of tissue distribution, fruit, present in small cells of the outer pericarp of mature fruit, but not large cells.

The catalysed reaction is Specificity close to that of papain.. In terms of biological role, cysteine protease responsible for the cleavage of kiwellin into kissper and KiTH. This Actinidia deliciosa (Kiwi) protein is Actinidain.